We begin with the raw amino-acid sequence, 442 residues long: MKPGPPRRGTAQGQRVDTATHAPGARGLLLPPLLLLLLAGRAAGAQRWRNENFERPVDLEGSGDDDSFPDDELDDLYSGSGSGYFEQESGLETAMRFIPDMALAAPTAPAMLPTTVIQPVDTPFEELLSEHPSPEPVTSPPLVTEVTEVVEESSQKATTISTTTSTTAATTTGAPTMATAPATAATTAPSTPEAPPATATVADVRTTGIQGMLPLPLTTAATAKITTPAAPSPPTTVATLDTEAPTPRLVNTATSRPRALPRPVTTQEPDVAERSTLPLGTTAPGPTEMAQTPTPESLLTTIQDEPEVPVSGGPSGDFELQEETTQPDTANEVVAVEGAAAKPSPPLGTLPKGARPGPGLHDNAIDSGSSAAQLPQKSILERKEVLVAVIVGGVVGALFAAFLVTLLIYRMKKKDEGSYTLEEPKQASVTYQKPDKQEEFYA.

2 disordered regions span residues 1-25 (MKPG…APGA) and 47-80 (RWRN…YSGS). Positions 1–44 (MKPGPPRRGTAQGQRVDTATHAPGARGLLLPPLLLLLLAGRAAG) are cleaved as a signal peptide. At 45 to 387 (AQRWRNENFE…SILERKEVLV (343 aa)) the chain is on the extracellular side. Residues 48–58 (WRNENFERPVD) are compositionally biased toward basic and acidic residues. Acidic residues predominate over residues 61–75 (GSGDDDSFPDDELDD). O-linked (Xyl...) (glycosaminoglycan) serine glycosylation is found at Ser78, Ser80, Ser82, and Ser89. Residue Thr107 is glycosylated (O-linked (GalNAc) threonine; by GALNT13). 3 disordered regions span residues 152-199 (ESSQ…PATA), 253-293 (ATSR…AQTP), and 305-327 (EPEV…TTQP). 2 stretches are compositionally biased toward low complexity: residues 157 to 199 (ATTI…PATA) and 276 to 287 (TLPLGTTAPGPT). The O-linked (GalNAc) serine; by GALNT13 glycan is linked to Ser161. O-linked (GalNAc) threonine; by GALNT13 glycosylation is found at Thr162, Thr163, Thr170, and Thr172. Ser315 and Ser367 each carry an O-linked (Xyl...) (glycosaminoglycan) serine glycan. The chain crosses the membrane as a helical span at residues 388-408 (AVIVGGVVGALFAAFLVTLLI). 4 positions are modified to phosphotyrosine: Tyr409, Tyr419, Tyr431, and Tyr441. Residues 409-442 (YRMKKKDEGSYTLEEPKQASVTYQKPDKQEEFYA) lie on the Cytoplasmic side of the membrane. A disordered region spans residues 419-442 (YTLEEPKQASVTYQKPDKQEEFYA). The segment covering 433 to 442 (KPDKQEEFYA) has biased composition (basic and acidic residues).

Belongs to the syndecan proteoglycan family. In terms of assembly, interacts with TIAM1. Interacts with PTN (via heparan sulfate chains); this interaction mediates the neurite outgrowth-promoting signal from PTN to the cytoskeleton of growing neurites; this interaction mediates osteoblast recruitment. Interacts with MDK; this interaction induces SDC3 clustering; this interaction induces neuronal cell adhesion and neurite outgrowth. Post-translationally, O-glycosylated within the Thr/Ser-rich region which could interact with lectin domains on other molecules.

The protein localises to the cell membrane. Its function is as follows. Cell surface proteoglycan that may bear heparan sulfate. May have a role in the organization of cell shape by affecting the actin cytoskeleton, possibly by transferring signals from the cell surface in a sugar-dependent mechanism. This is Syndecan-3 (Sdc3) from Mus musculus (Mouse).